The chain runs to 251 residues: Derlin-1 (251 aa).

S2 carries the N-acetylserine modification. At 2-15 (SDIGDWFRSIPAIT) the chain is on the cytoplasmic side. Residues 16-31 (RYWFAATVAVPLVGKL) traverse the membrane as a helical segment. Residues 32-69 (GLISPAYLFLWPEAFLYRFQIWRPITATFYFPVGPGTG) are Lumenal-facing. The chain crosses the membrane as a helical span at residues 70–89 (FLYLVNLYFLYQYSTRLETG). The Cytoplasmic portion of the chain corresponds to 90–94 (AFDGR). A helical transmembrane segment spans residues 95–115 (PADYLFMLLFNWICIVITGLA). Residues 116 to 122 (MDMQLLM) lie on the Lumenal side of the membrane. The chain crosses the membrane as a helical span at residues 123–137 (IPLIMSVLYVWAQLN). Residues 138–154 (RDMIVSFWFGTRFKACY) are Cytoplasmic-facing. Residues 155–166 (LPWVILGFNYII) form a helical membrane-spanning segment. Residues 167 to 170 (GGSV) are Lumenal-facing. The helical transmembrane segment at 171–189 (INELIGNLVGHLYFFLMFR) threads the bilayer. At 190-251 (YPMDLGGRNF…WGQGFRLGDQ (62 aa)) the chain is on the cytoplasmic side. A Phosphoserine modification is found at S201. At T202 the chain carries Phosphothreonine. At S226 the chain carries Phosphoserine. Positions 229–251 (RAADQNGGGGRHNWGQGFRLGDQ) are disordered. The short motif at 241 to 248 (NWGQGFRL) is the SHP-box element.

It belongs to the derlin family. Homotetramer. The four subunits of the tetramer are arranged in a twofold symmetry. Forms heterooligomers with DERL2 and DERL3; binding to DERL3 is poorer than that between DERL2 and DERL3. Interacts (via SHP-box motif) with VCP. Interacts with AMFR, SELENOS, SEL1L, SELENOK and SYVN1, as well as with SEL1L-SYVN1 and VCP-SELENOS protein complexes; this interaction is weaker than that observed between DERL2 and these complexes. Interacts with NGLY1 and YOD1. Does not bind to EDEM1. Interacts with DNAJB9. Interacts with RNF103. Interacts with HM13. Interacts with XBP1 isoform 1 (via luminal/ectodomain domain); the interaction obviates the need for ectodomain shedding prior HM13/SPP-mediated XBP1 isoform 1 cleavage. Interacts with the signal recognition particle/SRP and the SRP receptor; in the process of endoplasmic reticulum stress-induced pre-emptive quality control. May interact with UBXN6. Interacts with ZFAND2B; probably through VCP. Interacts with CCDC47. Interacts with C18orf32. May interact with TRAM1. Forms a complex with SVIP and VCP/p97. In terms of assembly, (Microbial infection) Interacts with the cytomegalovirus US11 protein. In terms of tissue distribution, ubiquitous.

It is found in the endoplasmic reticulum membrane. Functional component of endoplasmic reticulum-associated degradation (ERAD) for misfolded lumenal proteins. Forms homotetramers which encircle a large channel traversing the endoplasmic reticulum (ER) membrane. This allows the retrotranslocation of misfolded proteins from the ER into the cytosol where they are ubiquitinated and degraded by the proteasome. The channel has a lateral gate within the membrane which provides direct access to membrane proteins with no need to reenter the ER lumen first. May mediate the interaction between VCP and the misfolded protein. Also involved in endoplasmic reticulum stress-induced pre-emptive quality control, a mechanism that selectively attenuates the translocation of newly synthesized proteins into the endoplasmic reticulum and reroutes them to the cytosol for proteasomal degradation. By controlling the steady-state expression of the IGF1R receptor, indirectly regulates the insulin-like growth factor receptor signaling pathway. Its function is as follows. (Microbial infection) In case of infection by cytomegaloviruses, it plays a central role in the export from the ER and subsequent degradation of MHC class I heavy chains via its interaction with US11 viral protein, which recognizes and associates with MHC class I heavy chains. Also participates in the degradation process of misfolded cytomegalovirus US2 protein. This is Derlin-1 from Homo sapiens (Human).